The sequence spans 189 residues: uncharacterized protein (189 aa).

Belongs to the flavoredoxin family. The cofactor is FMN.

This is an uncharacterized protein from Escherichia coli (strain K12).